A 289-amino-acid chain; its full sequence is Phosphatidylglycerol--prolipoprotein diacylglyceryl transferase (289 aa).

Helical transmembrane passes span 23–43, 61–81, 99–119, 125–145, 199–219, 226–246, and 259–279; these read ALHW…WLAV, LLYM…VLFY, GGMS…WFAH, FFQV…AGRL, SQLY…NLFI, GSVS…TEFF, and LFSM…LMMV. Position 144 (arginine 144) interacts with a 1,2-diacyl-sn-glycero-3-phospho-(1'-sn-glycerol).

The protein belongs to the Lgt family.

It is found in the cell inner membrane. The enzyme catalyses L-cysteinyl-[prolipoprotein] + a 1,2-diacyl-sn-glycero-3-phospho-(1'-sn-glycerol) = an S-1,2-diacyl-sn-glyceryl-L-cysteinyl-[prolipoprotein] + sn-glycerol 1-phosphate + H(+). The protein operates within protein modification; lipoprotein biosynthesis (diacylglyceryl transfer). Functionally, catalyzes the transfer of the diacylglyceryl group from phosphatidylglycerol to the sulfhydryl group of the N-terminal cysteine of a prolipoprotein, the first step in the formation of mature lipoproteins. This chain is Phosphatidylglycerol--prolipoprotein diacylglyceryl transferase, found in Pectobacterium atrosepticum (strain SCRI 1043 / ATCC BAA-672) (Erwinia carotovora subsp. atroseptica).